The chain runs to 379 residues: Putative phosphatidate phosphatase (379 aa).

Positions 1 to 53 are disordered; that stretch reads MPAVKIIMSTETSASETTPLRRSENETPDHKELAQSNSNSRQTTVNSNNNNYS. The segment covering 9 to 18 has biased composition (polar residues); that stretch reads STETSASETT. A compositionally biased stretch (basic and acidic residues) spans 19–33; sequence PLRRSENETPDHKEL. The segment covering 35 to 53 has biased composition (low complexity); it reads QSNSNSRQTTVNSNNNNYS. A glycan (N-linked (GlcNAc...) asparagine) is linked at asparagine 51. Transmembrane regions (helical) follow at residues 90–110 and 138–158; these read VGLD…FFLL and MLYF…EVII. Asparagine 169 carries an N-linked (GlcNAc...) asparagine glycan. 2 consecutive transmembrane segments (helical) span residues 266–286 and 330–350; these read SFPS…ALYL and AGSL…SDLF.

The protein belongs to the PA-phosphatase related phosphoesterase family. Homodimer. This complex seems not to be involved in substrate recognition, it may confer only structural or functional stability. As to expression, expressed in embryonic gut in a pattern that guides germ cells towards mesoderm (initially in hindgut and then on lower side of gut). During extended germ band stage, expressed in ectoderm as a medial band throughout the trunk.

It localises to the membrane. The catalysed reaction is a 1,2-diacyl-sn-glycero-3-phosphate + H2O = a 1,2-diacyl-sn-glycerol + phosphate. Its function is as follows. Responsible for guiding the germ cells early in the process of migration from the lumen of the developing gut towards the overlying mesoderm, where the germ cells enter the gonads. May be involved in lipid metabolism. The sequence is that of Putative phosphatidate phosphatase (wun) from Drosophila melanogaster (Fruit fly).